Here is a 202-residue protein sequence, read N- to C-terminus: Protein TIFY 11g (202 aa).

The span at 1 to 11 shows a compositional bias: gly residues; that stretch reads MDAVGAAGGGA. Residues 1 to 31 form a disordered region; the sequence is MDAVGAAGGGAMLPAAARRGQPPQPPCMTTA. The segment covering 12–21 has biased composition (low complexity); it reads MLPAAARRGQ. The region spanning 101–136 is the Tify domain; the sequence is ATAPTAPLTIVYGGQVLVFEHYTAEAAEKLVQRTQH. The short motif at 185–200 is the Jas element; it reads PIARKASLQRFLQKRK. Positions 187–194 match the Nuclear localization signal motif; it reads ARKASLQR.

The protein belongs to the TIFY/JAZ family. In terms of processing, ubiquitinated. Targeted for degradation by the SCF(COI1) E3 ubiquitin ligase-proteasome pathway during jasmonate signaling.

The protein localises to the nucleus. Functionally, repressor of jasmonate responses. The protein is Protein TIFY 11g of Oryza sativa subsp. japonica (Rice).